Here is an 810-residue protein sequence, read N- to C-terminus: S-adenosyl-L-methionine-dependent tRNA 4-demethylwyosine synthase (810 aa).

Disordered stretches follow at residues 86 to 116 (NGGG…KGGC) and 156 to 176 (RSST…VGKK). The span at 104 to 116 (GCCSSKGGKKGGC) shows a compositional bias: low complexity. Polar residues predominate over residues 159 to 172 (TPKVFSKNSSSNSR). Residues 205–360 (IYVLYSSLQG…KIDEWTSLLA (156 aa)) enclose the Flavodoxin-like domain. Residues 211–215 (SLQGA) and 304–337 (VLGL…RRIF) each bind FMN. Acidic residues predominate over residues 374–397 (DENADSEEDEEEGNGSDELGDVED). Residues 374–407 (DENADSEEDEEEGNGSDELGDVEDIGGKGSNGKF) form a disordered region. The Radical SAM core domain occupies 463-713 (FNIASSRCME…ELQRRGLHYD (251 aa)). [4Fe-4S] cluster contacts are provided by Cys-479, Cys-483, and Cys-486. Residue Lys-496 forms a Glycyl lysine isopeptide (Lys-Gly) (interchain with G-Cter in ubiquitin) linkage. The interval 782–810 (RVYRKDKKKQNKENQETTTRETPLPPIPA) is disordered.

It belongs to the TYW1 family. Requires [4Fe-4S] cluster as cofactor.

The protein localises to the endoplasmic reticulum. It carries out the reaction N(1)-methylguanosine(37) in tRNA(Phe) + pyruvate + S-adenosyl-L-methionine = 4-demethylwyosine(37) in tRNA(Phe) + 5'-deoxyadenosine + L-methionine + CO2 + H2O. It functions in the pathway tRNA modification; wybutosine-tRNA(Phe) biosynthesis. Its function is as follows. Component of the wybutosine biosynthesis pathway. Wybutosine is a hyper modified guanosine with a tricyclic base found at the 3'-position adjacent to the anticodon of eukaryotic phenylalanine tRNA. Catalyzes the condensation of N-methylguanine with 2 carbon atoms from pyruvate to form the tricyclic 4-demethylwyosine, an intermediate in wybutosine biosynthesis. This Saccharomyces cerevisiae (strain ATCC 204508 / S288c) (Baker's yeast) protein is S-adenosyl-L-methionine-dependent tRNA 4-demethylwyosine synthase (TYW1).